Consider the following 287-residue polypeptide: ATP synthase gamma chain (287 aa).

Belongs to the ATPase gamma chain family. F-type ATPases have 2 components, CF(1) - the catalytic core - and CF(0) - the membrane proton channel. CF(1) has five subunits: alpha(3), beta(3), gamma(1), delta(1), epsilon(1). CF(0) has three main subunits: a, b and c.

It is found in the cell inner membrane. Functionally, produces ATP from ADP in the presence of a proton gradient across the membrane. The gamma chain is believed to be important in regulating ATPase activity and the flow of protons through the CF(0) complex. This Colwellia psychrerythraea (strain 34H / ATCC BAA-681) (Vibrio psychroerythus) protein is ATP synthase gamma chain.